We begin with the raw amino-acid sequence, 331 residues long: Probable allantoicase (331 aa).

The protein belongs to the allantoicase family.

The enzyme catalyses allantoate + H2O = (S)-ureidoglycolate + urea. Its pathway is nitrogen metabolism; (S)-allantoin degradation; (S)-ureidoglycolate from allantoate (aminidohydrolase route): step 1/1. The protein is Probable allantoicase of Pseudomonas fluorescens (strain ATCC BAA-477 / NRRL B-23932 / Pf-5).